Consider the following 510-residue polypeptide: Sulfoquinovosyl transferase SQD2 (510 aa).

The transit peptide at 1-83 (MTTLSSINLS…SNDMTITQVR (83 aa)) directs the protein to the chloroplast. The residue at position 88 (Ser88) is a Phosphoserine. Residues 198-218 (PGVMVFGALAIAKMLSVPIVM) form a helical membrane-spanning segment.

The protein belongs to the glycosyltransferase group 1 family. Glycosyltransferase 4 subfamily.

The protein resides in the plastid. It localises to the chloroplast membrane. The enzyme catalyses UDP-alpha-D-6-sulfoquinovose + a 1,2-diacyl-sn-glycerol = a 6-sulfo-alpha-D-quinovosyldiacylglycerol + UDP + H(+). The protein operates within glycolipid biosynthesis. Functionally, catalyzes the transfer of the sulfoquinovose moiety from UDP-sulfoquinovose to diacylglycerol during sulfolipid biosynthesis. Sulfolipid contributes to maintaining a negatively charged lipid-water interface, a requirement for proper function of photosynthetic membranes. Sulfolipid may also function as a substitute of anionic phospholipids under phosphate-limited growth conditions. The protein is Sulfoquinovosyl transferase SQD2 of Arabidopsis thaliana (Mouse-ear cress).